We begin with the raw amino-acid sequence, 659 residues long: Oligopeptide-binding protein AmiA (659 aa).

Residues 1 to 22 form the signal peptide; the sequence is MKKNRVFATAGLVLLAAGVLAA. Cysteine 23 is lipidated: N-palmitoyl cysteine. Cysteine 23 carries S-diacylglycerol cysteine lipidation.

Belongs to the bacterial solute-binding protein 5 family.

It is found in the cell membrane. Part of the binding-protein-dependent transport system for oligopeptides; probably an oligopeptide binding protein. The polypeptide is Oligopeptide-binding protein AmiA (amiA) (Streptococcus pneumoniae serotype 4 (strain ATCC BAA-334 / TIGR4)).